The primary structure comprises 193 residues: Ribosomal RNA small subunit methyltransferase G (193 aa).

S-adenosyl-L-methionine contacts are provided by residues G72, F77, I123–E124, and R137.

The protein belongs to the methyltransferase superfamily. RNA methyltransferase RsmG family.

It localises to the cytoplasm. The enzyme catalyses guanosine(527) in 16S rRNA + S-adenosyl-L-methionine = N(7)-methylguanosine(527) in 16S rRNA + S-adenosyl-L-homocysteine. Specifically methylates the N7 position of guanine in position 527 of 16S rRNA. The protein is Ribosomal RNA small subunit methyltransferase G of Wolinella succinogenes (strain ATCC 29543 / DSM 1740 / CCUG 13145 / JCM 31913 / LMG 7466 / NCTC 11488 / FDC 602W) (Vibrio succinogenes).